The chain runs to 992 residues: Meckelin (992 aa).

A signal peptide spans 1–35 (MVMRTRPLAAMAVRSCFSALTGTVYLLLVLCEVSW). The Extracellular segment spans residues 36–516 (AQIFSFPFQR…SVKYEMNQGD (481 aa)). The cysteine-rich stretch occupies residues 37–280 (QIFSFPFQRP…FHYVFEGAAG (244 aa)). 12 cysteine pairs are disulfide-bonded: Cys49–Cys62, Cys65–Cys78, Cys80–Cys97, Cys100–Cys114, Cys117–Cys127, Cys129–Cys150, Cys153–Cys170, Cys173–Cys184, Cys186–Cys197, Cys237–Cys246, Cys253–Cys268, and Cys354–Cys375. Asn242 carries N-linked (GlcNAc...) asparagine glycosylation. Residues 517-545 (AFVQTDIALGVLGGLAVLSSLLKTAGWKR) form a helical membrane-spanning segment. At 546–555 (RIGSPMIDLQ) the chain is on the cytoplasmic side. A helical transmembrane segment spans residues 556-587 (TVMKFLLYYAGDLANVFFIITVGTGLYWLIFF). Residues 588–600 (KAQKSVSVLLPMP) are Extracellular-facing. Residues 601–628 (VQEERFVTYVGCAFAMKALQFLHKLISQ) form a helical membrane-spanning segment. Residues 629 to 667 (ITIDIFFIDWERPKGKVLKAVEGEGGVRSATVPVSIWRT) lie on the Cytoplasmic side of the membrane. Positions 668–676 (YFVANEWNE) form an intramembrane region, helical. A discontinuously helical transmembrane segment spans residues 668-698 (YFVANEWNEIQTVRKINPLFQVLTTLFFLEV). An intramembrane segment occupies 677–685 (IQTVRKINP). An intramembrane region (helical) is located at residues 686–698 (LFQVLTTLFFLEV). Over 699 to 728 (VGFKNLALMDPSSSLSRSLSDYAAPYSRIL) the chain is Extracellular. The helical intramembrane region spans 729-754 (RYAVATTIWLVIGIVQVVFFAAFYER). The discontinuously helical transmembrane segment at 729–768 (RYAVATTIWLVIGIVQVVFFAAFYERFIEDKIRQFVDLCS) threads the bilayer. Residues 755–759 (FIEDK) lie within the membrane without spanning it. Positions 760 to 768 (IRQFVDLCS) form an intramembrane region, helical. Over 769–923 (MSNVSVFLLS…SIFYNDESHS (155 aa)) the chain is Cytoplasmic. The segment at residues 924 to 926 (FSS) is an intramembrane region (helical). A discontinuously helical transmembrane segment spans residues 924–949 (FSSVLYYGNEATLLIFDLLFFCVVDL). Residues 927 to 933 (VLYYGNE) lie within the membrane without spanning it. Residues 934–949 (ATLLIFDLLFFCVVDL) constitute an intramembrane region (helical). The Extracellular segment spans residues 950 to 954 (ACQNF). A helical transmembrane segment spans residues 955 to 982 (VLASFLTYLQQEIFRFIRNTVGQKNLAT). At 983-992 (KTLVDERFLI) the chain is on the cytoplasmic side.

Homodimer. Part of the tectonic-like complex (also named B9 complex). Interacts with DNAJB9, DNAJC10 and mutated SFTPC. Interacts with SYNE2 during the early establishment of cell polarity. Interacts (via C-terminus) with FLNA. Interacts with TMEM218. Interacts with WNT5A. Interacts with ROR2.

Its subcellular location is the cell membrane. It localises to the endoplasmic reticulum membrane. The protein resides in the cytoplasm. It is found in the cytoskeleton. The protein localises to the cilium basal body. In terms of biological role, part of the tectonic-like complex which is required for tissue-specific ciliogenesis and may regulate ciliary membrane composition. Involved in centrosome migration to the apical cell surface during early ciliogenesis. Required for ciliary structure and function, including a role in regulating length and appropriate number through modulating centrosome duplication. Is a key regulator of stereociliary bundle orientation. Required for epithelial cell branching morphology. Essential for endoplasmic reticulum-associated degradation (ERAD) of surfactant protein C (sftpc). Involved in the negative regulation of canonical Wnt signaling, and activation of the non-canonical cascade stimulated by WNT5A. In non-canonical Wnt signaling, it may act as ROR2 coreceptor. The sequence is that of Meckelin (Tmem67) from Rattus norvegicus (Rat).